The chain runs to 484 residues: Mitochondrial metal transporter 2 (484 aa).

A mitochondrion-targeting transit peptide spans 1–56; sequence MLRISIDSIKQFGSFVPGYNNTSYHAAGRAIRTSSLYSTMISANPRRCLHSSKLLN. Residues 73–82 are compositionally biased toward polar residues; sequence SSQNGSNSRQ. The segment at 73 to 114 is disordered; sequence SSQNGSNSRQNESEGKKEGKASSVKSLLQHTHSHSHTHMHDN. Residues 83-92 are compositionally biased toward basic and acidic residues; sequence NESEGKKEGK. The next 5 helical transmembrane spans lie at 132–152, 158–178, 209–229, 256–276, and 316–336; these read ITWI…VGGI, ALLA…LTLF, ILAM…VGPV, ATNV…EWVF, and YFFN…GLII. Residues 453–484 are disordered; that stretch reads DSKGDLEHSHDTKSTNHTHTHSDSADTHTHKH.

Belongs to the cation diffusion facilitator (CDF) transporter (TC 2.A.4) family. SLC30A subfamily.

The protein localises to the mitochondrion membrane. Its function is as follows. Mitochondrial metal transporter involved in mitochondrial iron accumulation. This is Mitochondrial metal transporter 2 (MMT2) from Saccharomyces cerevisiae (strain ATCC 204508 / S288c) (Baker's yeast).